The chain runs to 384 residues: Chaperone protein DnaJ (384 aa).

The 66-residue stretch at 5-70 (DYYEILGVTR…QKKRIYDTYG (66 aa)) folds into the J domain. The segment at 134–212 (GTEKEIRLQT…CNGQGRTRQS (79 aa)) adopts a CR-type zinc-finger fold. 8 residues coordinate Zn(2+): Cys147, Cys150, Cys164, Cys167, Cys186, Cys189, Cys200, and Cys203. CXXCXGXG motif repeat units follow at residues 147–154 (CEECNGSG), 164–171 (CPVCQGSG), 186–193 (CTRCQGMG), and 200–207 (CKTCNGQG). Positions 352–384 (KEKSGEKVRKWPWSKRKDREKKSMAESTREART) are disordered.

The protein belongs to the DnaJ family. In terms of assembly, homodimer. The cofactor is Zn(2+).

The protein localises to the cytoplasm. Participates actively in the response to hyperosmotic and heat shock by preventing the aggregation of stress-denatured proteins and by disaggregating proteins, also in an autonomous, DnaK-independent fashion. Unfolded proteins bind initially to DnaJ; upon interaction with the DnaJ-bound protein, DnaK hydrolyzes its bound ATP, resulting in the formation of a stable complex. GrpE releases ADP from DnaK; ATP binding to DnaK triggers the release of the substrate protein, thus completing the reaction cycle. Several rounds of ATP-dependent interactions between DnaJ, DnaK and GrpE are required for fully efficient folding. Also involved, together with DnaK and GrpE, in the DNA replication of plasmids through activation of initiation proteins. The protein is Chaperone protein DnaJ of Syntrophobacter fumaroxidans (strain DSM 10017 / MPOB).